The following is a 97-amino-acid chain: Type VII secretion system extracellular protein A (97 aa).

Residues 61-93 (KVEKFAQLLEEIKQQLNSTADAVQEQDQQLSNN) adopt a coiled-coil conformation.

Belongs to the WXG100 family. sagEsxA-like subfamily. In terms of assembly, forms both homodimers and heterodimers with EsxC.

The protein resides in the secreted. Its function is as follows. Virulence factor that is important for the establishment of infection in the host. EsxA is required for EsxB synthesis as well as secretion. Modulates host cell apoptotic pathways and mediates together with EsxB the release of S.aureus from the host cell. By acting on apoptosis, plays a role in the modulation of dendritic cell-mediated immunity. This chain is Type VII secretion system extracellular protein A, found in Staphylococcus aureus (strain USA300).